The sequence spans 306 residues: Tyrosine recombinase XerC (306 aa).

Positions 10–94 (ARCHSYLQQF…AVKQWGEFLL (85 aa)) constitute a Core-binding (CB) domain. The 180-residue stretch at 115-294 (PLPKNIDVDS…DFQHLAKVYD (180 aa)) folds into the Tyr recombinase domain. Catalysis depends on residues Arg154, Lys178, His246, Arg249, and His272. Tyr281 acts as the O-(3'-phospho-DNA)-tyrosine intermediate in catalysis.

This sequence belongs to the 'phage' integrase family. XerC subfamily. In terms of assembly, forms a cyclic heterotetrameric complex composed of two molecules of XerC and two molecules of XerD.

Its subcellular location is the cytoplasm. Its function is as follows. Site-specific tyrosine recombinase, which acts by catalyzing the cutting and rejoining of the recombining DNA molecules. The XerC-XerD complex is essential to convert dimers of the bacterial chromosome into monomers to permit their segregation at cell division. It also contributes to the segregational stability of plasmids. This chain is Tyrosine recombinase XerC, found in Shewanella oneidensis (strain ATCC 700550 / JCM 31522 / CIP 106686 / LMG 19005 / NCIMB 14063 / MR-1).